A 141-amino-acid polypeptide reads, in one-letter code: Hemoglobin subunit beta-C (141 aa).

The Globin domain maps to 1–141 (PNKALITGFW…VASALAHRYH (141 aa)). Heme b is bound by residues His-58 and His-87.

Belongs to the globin family. As to quaternary structure, heterotetramer of two alpha chains and two beta chains. In terms of tissue distribution, red blood cells.

Functionally, involved in oxygen transport from the lung to the various peripheral tissues. The chain is Hemoglobin subunit beta-C (HBBC) from Ovis aries musimon (Mouflon).